The primary structure comprises 359 residues: MIINSNSSTIFSSIWLPVFFYVEPLDQQVIISILELMIYLVCIHLVNVSLHVALKIRLFHRNLYILALPMFGMWYELIIGKFITIAYRLKLLGLDFELGEHTAIWTNDPGKVLLVASLNGLELLIFGGFLQWHYMYSWIFGVLTVAVERVIASVLIENYESNTQNLMPAILLIISQFLSISMAFGLLFQKVGPLSAHFPWMISCPISVAAYVFVKKVNESFRREIKNPGRKRIFTLSQQFQVKENLRVLHLGTRLVFAVLSFIGICGCGIAALHYKIVPSYYCHLIENVLFLNPFLIGLTAMLSIPQWKEQFMKSFLTVRLFRNRRKPVHIVVEIEECAKKKNDVETNLYFKQLANSWI.

Helical transmembrane passes span valine 29–serine 49, isoleucine 65–isoleucine 85, tyrosine 134–isoleucine 156, proline 168–phenylalanine 188, leucine 194–valine 214, leucine 255–tyrosine 275, and leucine 285–isoleucine 305.

The protein belongs to the nematode receptor-like protein sre family.

It is found in the membrane. The sequence is that of Serpentine receptor class epsilon-33 (sre-33) from Caenorhabditis elegans.